The following is a 123-amino-acid chain: Protein Wnt-3b (123 aa).

S1 carries O-palmitoleoyl serine; by PORCN lipidation. C89 and C104 are oxidised to a cystine. The N-linked (GlcNAc...) asparagine glycan is linked to N90.

This sequence belongs to the Wnt family. Palmitoleoylation is required for efficient binding to frizzled receptors. Depalmitoleoylation leads to Wnt signaling pathway inhibition.

Its subcellular location is the secreted. It localises to the extracellular space. The protein localises to the extracellular matrix. Functionally, ligand for members of the frizzled family of seven transmembrane receptors. Probable developmental protein. May be a signaling molecule which affects the development of discrete regions of tissues. Is likely to signal over only few cell diameters. The polypeptide is Protein Wnt-3b (WNT-3B) (Plethodon jordani (Red-cheeked salamander)).